The sequence spans 474 residues: Lactococcin A secretion protein LcnD (474 aa).

Over 1–21 the chain is Cytoplasmic; it reads MFDKKLLESSELYDKRYRNFS. The helical transmembrane segment at 22–44 threads the bilayer; the sequence is TLIILPLFILLVGGVIFTFFAHK. Topologically, residues 45 to 474 are extracellular; sequence ELTVISTGSI…LDKIMGRGNQ (430 aa).

It belongs to the membrane fusion protein (MFP) (TC 8.A.1) family.

It localises to the cell membrane. In terms of biological role, involved in the secretion of lactococcin A. The polypeptide is Lactococcin A secretion protein LcnD (lcnD) (Lactococcus lactis subsp. cremoris (Streptococcus cremoris)).